The chain runs to 530 residues: Transcription factor SPT20 homolog (530 aa).

At S296 the chain carries Phosphoserine. The tract at residues 419–530 (CPVKMSHSSS…PASSSQRHES (112 aa)) is disordered. Low complexity-rich tracts occupy residues 424-436 (SHSSSGSASLNSG) and 466-475 (SSSGNSSSGN). T490 is modified (phosphothreonine). The span at 514-530 (LSPAALSPASSSQRHES) shows a compositional bias: low complexity. Phosphoserine occurs at positions 515 and 520.

Belongs to the SPT20 family. As to quaternary structure, interacts with ATG9A. Interacts with MAPK14.

In terms of biological role, required for MAP kinase p38 (MAPK11, MAPK12, MAPK13 and/or MAPK14) activation during gastrulation. Required for down-regulation of E-cadherin during gastrulation by regulating E-cadherin protein level downstream from NCK-interacting kinase (NIK) and independently of the regulation of transcription by FGF signaling and Snail. Required for starvation-induced ATG9A trafficking during autophagy. In Rattus norvegicus (Rat), this protein is Transcription factor SPT20 homolog (Supt20h).